The primary structure comprises 704 residues: Polyribonucleotide nucleotidyltransferase (704 aa).

Mg(2+)-binding residues include aspartate 485 and aspartate 491. A KH domain is found at 552 to 611; sequence PRIYTMKIDPKKIKDVIGKGGATIRALTEETGTSIDIDDDGTVKIAAVDGNAVKTVMARI. The 69-residue stretch at 621 to 689 folds into the S1 motif domain; sequence GAVYTGKVTR…RQGRIRLTMR (69 aa).

This sequence belongs to the polyribonucleotide nucleotidyltransferase family. As to quaternary structure, component of the RNA degradosome, which is a multiprotein complex involved in RNA processing and mRNA degradation. Mg(2+) serves as cofactor.

It is found in the cytoplasm. It carries out the reaction RNA(n+1) + phosphate = RNA(n) + a ribonucleoside 5'-diphosphate. Functionally, involved in mRNA degradation. Catalyzes the phosphorolysis of single-stranded polyribonucleotides processively in the 3'- to 5'-direction. This chain is Polyribonucleotide nucleotidyltransferase, found in Mannheimia succiniciproducens (strain KCTC 0769BP / MBEL55E).